The sequence spans 178 residues: Large ribosomal subunit protein uL6 (178 aa).

The protein belongs to the universal ribosomal protein uL6 family. Part of the 50S ribosomal subunit.

This protein binds to the 23S rRNA, and is important in its secondary structure. It is located near the subunit interface in the base of the L7/L12 stalk, and near the tRNA binding site of the peptidyltransferase center. This chain is Large ribosomal subunit protein uL6, found in Natranaerobius thermophilus (strain ATCC BAA-1301 / DSM 18059 / JW/NM-WN-LF).